The chain runs to 244 residues: Carbonyl reductase [NADPH] 2 (244 aa).

Leu11 to Arg39 provides a ligand contact to NADP(+). Ser42 carries the phosphoserine modification. Ser136 contacts substrate. Tyr149 acts as the Proton acceptor in catalysis. At Ser176 the chain carries Phosphoserine.

This sequence belongs to the short-chain dehydrogenases/reductases (SDR) family. As to quaternary structure, homotetramer. As to expression, predominantly expressed in lung, in ciliated cells, non-ciliated bronchiolar cells and type-II alveolar pneumocytes. Also detected in adipose tissue (at protein level). Low expression in testis, heart, kidney, spleen, brain and liver.

It localises to the mitochondrion matrix. It catalyses the reaction a secondary alcohol + NADP(+) = a ketone + NADPH + H(+). Its function is as follows. May function in the pulmonary metabolism of endogenous carbonyl compounds, such as aliphatic aldehydes and ketones derived from lipid peroxidation, 3-ketosteroids and fatty aldehydes, as well as in xenobiotic metabolism. The polypeptide is Carbonyl reductase [NADPH] 2 (Cbr2) (Mus musculus (Mouse)).